Reading from the N-terminus, the 286-residue chain is Tyrosine recombinase Tlet_1492 (286 aa).

Residues 1–86 form the Core-binding (CB) domain; the sequence is MERILQNFSD…SLRSFFNYLQ (86 aa). Positions 107–280 constitute a Tyr recombinase domain; that stretch reads RIPDFLLPSE…VDQEKFDAIN (174 aa). Active-site residues include arginine 143, lysine 168, histidine 232, arginine 235, and histidine 258. The active-site O-(3'-phospho-DNA)-tyrosine intermediate is tyrosine 267.

The protein belongs to the 'phage' integrase family.

It localises to the cytoplasm. In terms of biological role, site-specific tyrosine recombinase, which acts by catalyzing the cutting and rejoining of the recombining DNA molecules. In Pseudothermotoga lettingae (strain ATCC BAA-301 / DSM 14385 / NBRC 107922 / TMO) (Thermotoga lettingae), this protein is Tyrosine recombinase Tlet_1492.